A 926-amino-acid chain; its full sequence is Alanine--tRNA ligase (926 aa).

H611, H615, C714, and H718 together coordinate Zn(2+).

This sequence belongs to the class-II aminoacyl-tRNA synthetase family. Zn(2+) serves as cofactor.

It localises to the cytoplasm. It catalyses the reaction tRNA(Ala) + L-alanine + ATP = L-alanyl-tRNA(Ala) + AMP + diphosphate. In terms of biological role, catalyzes the attachment of alanine to tRNA(Ala) in a two-step reaction: alanine is first activated by ATP to form Ala-AMP and then transferred to the acceptor end of tRNA(Ala). Also edits incorrectly charged Ser-tRNA(Ala) and Gly-tRNA(Ala) via its editing domain. The protein is Alanine--tRNA ligase of Methanosarcina mazei (strain ATCC BAA-159 / DSM 3647 / Goe1 / Go1 / JCM 11833 / OCM 88) (Methanosarcina frisia).